A 261-amino-acid chain; its full sequence is 22 kDa alpha-zein 8b (261 aa).

The first 16 residues, 1-16, serve as a signal peptide directing secretion; sequence LALLALLALFVSATNA.

It belongs to the zein family.

Functionally, zeins are major seed storage proteins. The sequence is that of 22 kDa alpha-zein 8b from Zea mays (Maize).